Reading from the N-terminus, the 218-residue chain is Attacin-B (218 aa).

Residues 1–17 (MQKTSILILALFAIAEA) form the signal peptide. The propeptide occupies 18-28 (VPTTGPIRVRR).

The protein belongs to the attacin/sarcotoxin-2 family. As to expression, hemolymph (at protein level).

Its subcellular location is the secreted. In terms of biological role, hemolymph antibacterial protein. The chain is Attacin-B (AttB) from Drosophila melanogaster (Fruit fly).